The chain runs to 141 residues: Large ribosomal subunit protein uL11 (141 aa).

Belongs to the universal ribosomal protein uL11 family. As to quaternary structure, part of the ribosomal stalk of the 50S ribosomal subunit. Interacts with L10 and the large rRNA to form the base of the stalk. L10 forms an elongated spine to which L12 dimers bind in a sequential fashion forming a multimeric L10(L12)X complex. In terms of processing, one or more lysine residues are methylated.

In terms of biological role, forms part of the ribosomal stalk which helps the ribosome interact with GTP-bound translation factors. This Prochlorococcus marinus subsp. pastoris (strain CCMP1986 / NIES-2087 / MED4) protein is Large ribosomal subunit protein uL11.